Reading from the N-terminus, the 650-residue chain is Leukocyte immunoglobulin-like receptor subfamily B member 1 (650 aa).

The first 23 residues, 1 to 23, serve as a signal peptide directing secretion; sequence MTPILTVLICLGLSLGPRTHVQA. The Extracellular portion of the chain corresponds to 24–461; sequence GHLPKPTLWA…QSGLGRHLGV (438 aa). 4 consecutive Ig-like C2-type domains span residues 27 to 115, 116 to 221, 222 to 312, and 313 to 409; these read PKPT…DPLE, LVVT…LVLG, VSKK…APSD, and PLDI…YLLT. Intrachain disulfides connect Cys49–Cys98, Cys145–Cys197, Cys157–Cys167, and Cys246–Cys297. Asn281, Asn302, and Asn341 each carry an N-linked (GlcNAc...) asparagine glycan. Residues Cys346 and Cys397 are joined by a disulfide bond. The segment at 415 to 451 is disordered; that stretch reads LELVVSGPSGGPSSPTTGPTSTSGPEDQPLTPTGSDP. The segment covering 425 to 439 has biased composition (low complexity); sequence GPSSPTTGPTSTSGP. The helical transmembrane segment at 462–482 threads the bilayer; it reads VIGILVAVILLLLLLLLLFLI. Residues 483 to 650 are Cytoplasmic-facing; the sequence is LRHRRQGKHW…PSIYATLAIH (168 aa). The segment at 491–524 is disordered; sequence HWTSTQRKADFQHPAGAVGPEPTDRGLQWRSSPA. Short sequence motifs (ITIM motif) lie at residues 531-536 and 560-565; these read NLYAAV and VTYAEV. A Phosphotyrosine modification is found at Tyr533. The disordered stretch occupies residues 563–650; sequence AEVKHSRPRR…PSIYATLAIH (88 aa). Basic and acidic residues-rich tracts occupy residues 564 to 574 and 586 to 600; these read EVKHSRPRREM and LDTK…RQMD. Short sequence motifs (ITIM motif) lie at residues 612-617 and 642-647; these read VTYAQL and SIYATL. Phosphotyrosine is present on residues Tyr614 and Tyr644.

Binds PTPN6 when phosphorylated. Binds FCER1A and FCGR1A. Interacts with human cytomegalovirus/HHV-5 protein UL18. Interacts with peptide-bound HLA-G-B2M complex. Interacts with peptide-bound HLA-F-B2M complex but not with peptide-free HLA-F open conformer. It does not probe the peptide sequence directly. In terms of processing, phosphorylated on tyrosine residues. Dephosphorylated by PTPN6. As to expression, expressed in B cells, monocytes and various dendritic cell (DC) subsets including myeloid, plasmacytoid and tolerogenic DCs (at protein level). Expressed in decidual macrophages (at protein level). Expressed in decidual NK cells (at protein level).

The protein localises to the cell membrane. Its subcellular location is the secreted. In terms of biological role, receptor for class I MHC antigens. Recognizes a broad spectrum of HLA-A, HLA-B, HLA-C, HLA-G and HLA-F alleles. Receptor for H301/UL18, a human cytomegalovirus class I MHC homolog. Ligand binding results in inhibitory signals and down-regulation of the immune response. Engagement of LILRB1 present on natural killer cells or T-cells by class I MHC molecules protects the target cells from lysis. Interaction with HLA-B or HLA-E leads to inhibition of FCER1A signaling and serotonin release. Inhibits FCGR1A-mediated phosphorylation of cellular proteins and mobilization of intracellular calcium ions. Recognizes HLA-G in complex with B2M/beta-2 microglobulin and a nonamer self-peptide. Upon interaction with peptide-bound HLA-G-B2M complex, triggers secretion of growth-promoting factors by decidual NK cells. Reprograms B cells toward an immune suppressive phenotype. This is Leukocyte immunoglobulin-like receptor subfamily B member 1 from Homo sapiens (Human).